Here is a 749-residue protein sequence, read N- to C-terminus: Probable serine/threonine-protein kinase drkC (749 aa).

The first 31 residues, 1 to 31 (MIIINKYIRMNKIAILFSFFILICCTGYSIS), serve as a signal peptide directing secretion. The Extracellular segment spans residues 32–423 (YKINGINENK…TSPNYQKIIY (392 aa)). The interval 124–153 (DRTDQVSTSSSSSSFSEENKKSSSDDSAPA) is disordered. A compositionally biased stretch (low complexity) spans 130–139 (STSSSSSSFS). N-linked (GlcNAc...) asparagine glycosylation is found at Asn-157, Asn-189, Asn-283, Asn-358, Asn-373, Asn-381, and Asn-397. The helical transmembrane segment at 424 to 444 (IVVGVGIAVLLIIAVGIYFII) threads the bilayer. At 445–749 (RLRIKNKRLN…QEIVKRLEAM (305 aa)) the chain is on the cytoplasmic side. The 259-residue stretch at 491–749 (IVVQNRIGRG…QEIVKRLEAM (259 aa)) folds into the Protein kinase domain. Residues 497–505 (IGRGSCAEV) and Lys-518 contribute to the ATP site. Asp-615 acts as the Proton acceptor in catalysis.

It belongs to the protein kinase superfamily. TKL Ser/Thr protein kinase family.

The protein resides in the membrane. It carries out the reaction L-seryl-[protein] + ATP = O-phospho-L-seryl-[protein] + ADP + H(+). It catalyses the reaction L-threonyl-[protein] + ATP = O-phospho-L-threonyl-[protein] + ADP + H(+). This is Probable serine/threonine-protein kinase drkC (drkC) from Dictyostelium discoideum (Social amoeba).